Here is a 101-residue protein sequence, read N- to C-terminus: DNA-directed RNA polymerase subunit omega (101 aa).

Low complexity predominate over residues 1 to 13 (MSSTPAAASATPS). Residues 1–22 (MSSTPAAASATPSHGALPAYDT) are disordered.

Belongs to the RNA polymerase subunit omega family. The RNAP catalytic core consists of 2 alpha, 1 beta, 1 beta' and 1 omega subunit. When a sigma factor is associated with the core the holoenzyme is formed, which can initiate transcription.

It catalyses the reaction RNA(n) + a ribonucleoside 5'-triphosphate = RNA(n+1) + diphosphate. Functionally, promotes RNA polymerase assembly. Latches the N- and C-terminal regions of the beta' subunit thereby facilitating its interaction with the beta and alpha subunits. The polypeptide is DNA-directed RNA polymerase subunit omega (Rhodococcus jostii (strain RHA1)).